Reading from the N-terminus, the 381-residue chain is Pentraxin-related protein PTX3 (381 aa).

Residues M1–A17 form the signal peptide. 2 cysteine pairs are disulfide-bonded: C179–C357 and C210–C271. In terms of domain architecture, Pentraxin (PTX) spans C179–S381. An N-linked (GlcNAc...) asparagine glycan is attached at N220.

As to quaternary structure, homooctamer; disulfide-linked. Binds to C1q.

It is found in the secreted. Its function is as follows. Plays a role in the regulation of innate resistance to pathogens, inflammatory reactions, possibly clearance of self-components and female fertility. The protein is Pentraxin-related protein PTX3 (Ptx3) of Mus musculus (Mouse).